The following is a 657-amino-acid chain: Zinc finger protein 630 (657 aa).

One can recognise a KRAB domain in the interval Val8–Pro79. 2 consecutive C2H2-type zinc fingers follow at residues Asn263 to His285 and Tyr291 to His313. Residues Tyr319–His341 form a C2H2-type 3; degenerate zinc finger. 9 consecutive C2H2-type zinc fingers follow at residues Tyr347 to His369, Phe375 to His397, Tyr403 to His425, Tyr431 to His453, Tyr459 to His481, Tyr487 to His509, Tyr515 to His537, Tyr543 to His565, and Tyr571 to His593. The C2H2-type 13; degenerate zinc-finger motif lies at Pro599–His621. A C2H2-type 14; degenerate zinc finger spans residues Ser627–Tyr649.

The protein belongs to the krueppel C2H2-type zinc-finger protein family.

It localises to the nucleus. In terms of biological role, may be involved in transcriptional regulation. In Homo sapiens (Human), this protein is Zinc finger protein 630 (ZNF630).